Here is a 449-residue protein sequence, read N- to C-terminus: Tol-Pal system protein TolB (449 aa).

Positions 1–36 are cleaved as a signal peptide; that stretch reads MDCPNMPLHINRRQMLLSAATAAGALALGPARDAFG.

It belongs to the TolB family. The Tol-Pal system is composed of five core proteins: the inner membrane proteins TolA, TolQ and TolR, the periplasmic protein TolB and the outer membrane protein Pal. They form a network linking the inner and outer membranes and the peptidoglycan layer.

It is found in the periplasm. Its function is as follows. Part of the Tol-Pal system, which plays a role in outer membrane invagination during cell division and is important for maintaining outer membrane integrity. The chain is Tol-Pal system protein TolB from Rhodopseudomonas palustris (strain HaA2).